Reading from the N-terminus, the 805-residue chain is MASGSDSKSDDLSTAILKQKSRPNRLIVDESINEDNSVVSLSQAKMDELQLFRGDTVLLKGKKRREAVCIVLSDDTCSDEKIRMNRVVRNNLRVRLGDVISIQPCPDVKYGKRIHVLPIDDTVEGITGNLFEVYLKPYFLEAYRPIRKGDIFLVRGGMRAVEFKVVETDPSPYCIVAPDTVIHCEGEPIKREDEEESLNEVGYDDIGGCRKQLAQIKEMVELPLRHPALFKAIGVKPPRGILLYGPPGTGKTLIARAVANETGAFFFLINGPEIMSKLAGESESNLRKAFEEAEKNAPAIIFIDELDAIAPKREKTHGEVERRIVSQLLTLMDGLKQRAHVIVMAATNRPNSIDPALRRFGRFDREVDIGIPDSTGRLEILQIHTKNMKLSDDVDLEQVANETHGHVGADLAALCSEAALQAIRKKMDLIDLEDETIDAEVMNSLAVTMDDFRWALSQSNPSALRETVVEVPQVTWEDIGGLEDVKRELQELVQYPVEHPDKFLKFGMTPSKGVLFYGPPGCGKTLLAKAIANECQANFISIKGPELLTMWFGESEANVREIFDKARQAAPCVLFFDELDSIAKARGGNIGDGGGAADRVINQILTEMDGMSTKKNVFIIGATNRPDIIDPAILRPGRLDQLIYIPLPDEKSRIAILKANLRKSPVAKDVDLDFLAKMTNGFSGADLTEICQRACKLAIRESIENEIRRERERQTNPSAMEVEEDDPVPEIRRDHFEEAMRFARRSVSDNDIRKYEMFAQTLQQSRGFGSFRFPAGGQGGAGPSQGAGGGSGGSHFNEEEDDLYG.

The residue at position 3 (serine 3) is a Phosphoserine. Residues 247-253, asparagine 348, histidine 384, and 521-526 contribute to the ATP site; these read PGTGKTL and GCGKTL. The segment at 768 to 805 is disordered; sequence FGSFRFPAGGQGGAGPSQGAGGGSGGSHFNEEEDDLYG. Over residues 776-793 the composition is skewed to gly residues; that stretch reads GGQGGAGPSQGAGGGSGG.

The protein belongs to the AAA ATPase family. Homohexamer. Forms a ring-shaped particle of 12.5 nm diameter, that displays 6-fold radial symmetry. Interacts with the FACT/DUF complex, which includes subunits ssrp1/duf87 and supt16h/duf140. In terms of processing, phosphorylated.

The protein localises to the cytoplasm. It localises to the cytosol. Its subcellular location is the endoplasmic reticulum. It is found in the nucleus. The protein resides in the stress granule. The enzyme catalyses ATP + H2O = ADP + phosphate + H(+). ATPase activity is inhibited or reduced by lowering pH from 9.0 to 7.0, and by addition of Ca(2+), EDTA, KNO(3) or by treatment with N-ethylmaleimide (NEM). Necessary for the fragmentation of Golgi stacks during mitosis and for their reassembly after mitosis. Involved in the formation of the nuclear envelope, and of the transitional endoplasmic reticulum (tER). The transfer of membranes from the endoplasmic reticulum to the Golgi apparatus occurs via 50-70 nm transition vesicles which derive from part-rough, part-smooth transitional elements of the endoplasmic reticulum (tER). Vesicle budding from the tER is an ATP-dependent process. Involved in endoplasmic reticulum stress-induced pre-emptive quality control, a mechanism that selectively attenuates the translocation of newly synthesized proteins into the endoplasmic reticulum and reroutes them to the cytosol for proteasomal degradation. Involved in clearance process by mediating G3BP1 extraction from stress granules. Also involved in DNA damage response: recruited to double-strand breaks (DSBs) sites and promotes the recruitment of tp53bp1 at DNA damage sites. Together with sprtn metalloprotease, involved in the repair of covalent DNA-protein cross-links (DPCs) during DNA synthesis. Involved in interstrand cross-link repair in response to replication stress by mediating unloading of the ubiquitinated CMG helicase complex. Enhances cell cycle progression and inhibits apoptosis at low temperatures. Essential for the maturation of ubiquitin-containing autophagosomes and the clearance of ubiquitinated protein by autophagy. Acts as a negative regulator of type I interferon production by promoting ubiquitination of rigi. May play a role in the ubiquitin-dependent sorting of membrane proteins to lysosomes where they undergo degradation. May more particularly play a role in caveolins sorting in cells. By controlling the steady-state expression of the IGF1R receptor, indirectly regulates the insulin-like growth factor receptor signaling pathway. This Xenopus tropicalis (Western clawed frog) protein is Transitional endoplasmic reticulum ATPase.